We begin with the raw amino-acid sequence, 879 residues long: Valine--tRNA ligase (879 aa).

A 'HIGH' region motif is present at residues 45–55 (PNVTGKLHLGH). The 'KMSKS' region signature appears at 521–525 (KMSKS). Lys524 contacts ATP. Residues 806 to 879 (LTELVNVDEE…ERIQDLKESK (74 aa)) adopt a coiled-coil conformation.

The protein belongs to the class-I aminoacyl-tRNA synthetase family. ValS type 1 subfamily. As to quaternary structure, monomer.

It is found in the cytoplasm. It catalyses the reaction tRNA(Val) + L-valine + ATP = L-valyl-tRNA(Val) + AMP + diphosphate. Functionally, catalyzes the attachment of valine to tRNA(Val). As ValRS can inadvertently accommodate and process structurally similar amino acids such as threonine, to avoid such errors, it has a 'posttransfer' editing activity that hydrolyzes mischarged Thr-tRNA(Val) in a tRNA-dependent manner. The sequence is that of Valine--tRNA ligase from Lactobacillus acidophilus (strain ATCC 700396 / NCK56 / N2 / NCFM).